Here is a 548-residue protein sequence, read N- to C-terminus: Ankyrin repeat domain-containing protein SOWAHA (548 aa).

An N-terminal signal peptide occupies residues M1–A19. Positions E114–K212 are disordered. Residues S136 to T153 show a composition bias toward polar residues. Pro residues predominate over residues G198 to K212. S258 is subject to Phosphoserine. 2 ANK repeats span residues S344–A373 and G383–V413. Residues P512–T548 are disordered.

Belongs to the SOWAH family.

The protein is Ankyrin repeat domain-containing protein SOWAHA (Sowaha) of Mus musculus (Mouse).